A 771-amino-acid chain; its full sequence is Leucine-rich repeat and fibronectin type III domain-containing protein 1 (771 aa).

The first 31 residues, 1–31 (MAPGPFSSALLSPPPAALPFLLLLWAGASRG), serve as a signal peptide directing secretion. The region spanning 32-65 (QPCPGRCICQNVAPTLTMLCAKTGLLFVPPAIDR) is the LRRNT domain. Residues 32-536 (QPCPGRCICQ…LRAHFLGGTM (505 aa)) are Extracellular-facing. LRR repeat units follow at residues 66–87 (RVVELRLTDNFIAAVRRRDFAN), 90–111 (SLVHLTLSRNTIGQVAAGAFAD), 114–135 (ALRALHLDSNRLAEVRGDQLRG), 138–159 (NLRHLILGNNQIRRVESAAFDA), 163–184 (TVEDLDLSYNNLEALPWEAVGQ), 187–208 (NLNTLTLDHNLIDHIAEGTFVQ), and 211–232 (KLVRLDMTSNRLHKLPPDGLFL). An N-linked (GlcNAc...) asparagine glycan is attached at Asn-87. The LRRCT domain occupies 252 to 298 (NPLHCNCELLWLRRLTREDDLETCATPEHLTDRYFWSIPEEEFLCEP). Positions 299 to 386 (PLITRQAGGR…GEATAPVEVC (88 aa)) constitute an Ig-like domain. Residues Cys-321 and Cys-370 are joined by a disulfide bond. N-linked (GlcNAc...) asparagine glycosylation occurs at Asn-343. The segment at 397-422 (PAAPPPLTEPGSSDIATPGRPGANDS) is disordered. In terms of domain architecture, Fibronectin type-III spans 424 to 520 (AERRLVAAEL…GCVQFTTAGD (97 aa)). Residues 537–557 (IIAIGGVIVASVLVFIVLLMI) form a helical membrane-spanning segment. The Cytoplasmic segment spans residues 558–771 (RYKVYGDGDS…STEWMLESTV (214 aa)). Residues Ser-613 and Ser-718 each carry the phosphoserine modification. Residues 654–743 (PSEETSGEES…HLDGAGGGAA (90 aa)) form a disordered region. The segment covering 719–732 (YPRRARRTKRHRST) has biased composition (basic residues). The short motif at 768 to 771 (ESTV) is the PDZ-binding element.

The protein belongs to the LRFN family. In terms of assembly, can form heteromeric complexes with LRFN2, LRFN3, LRFN4 and LRFN5. Forms homomeric complexes, but not across cell junctions. Interacts with DLG1, DLG2, DLG3 and DLG4. Interacts with 2 AMPA receptor subunits GRIA1 and GRIA2 and NMDA receptor subunit GRIN1. Glycosylated.

It localises to the membrane. Its subcellular location is the synapse. It is found in the postsynaptic density membrane. Functionally, promotes neurite outgrowth in hippocampal neurons. Involved in the regulation and maintenance of excitatory synapses. Induces the clustering of excitatory postsynaptic proteins, including DLG4, DLGAP1, GRIA1 and GRIN1. This chain is Leucine-rich repeat and fibronectin type III domain-containing protein 1 (LRFN1), found in Homo sapiens (Human).